A 298-amino-acid chain; its full sequence is Protoheme IX farnesyltransferase (298 aa).

9 helical membrane-spanning segments follow: residues 23-43 (LLLL…GKPY), 47-67 (LVVL…NMYF), 93-113 (VFIA…RIIN), 115-135 (HFAL…TYLL), 143-163 (IIAG…AAAG), 169-189 (ALLF…FLAT), 211-231 (IAVA…IVGL), 236-256 (VIGT…FHLA), and 278-298 (MMLG…YIIS).

The protein belongs to the UbiA prenyltransferase family. Protoheme IX farnesyltransferase subfamily.

It is found in the cell membrane. It carries out the reaction heme b + (2E,6E)-farnesyl diphosphate + H2O = Fe(II)-heme o + diphosphate. Its pathway is porphyrin-containing compound metabolism; heme O biosynthesis; heme O from protoheme: step 1/1. In terms of biological role, converts heme B (protoheme IX) to heme O by substitution of the vinyl group on carbon 2 of heme B porphyrin ring with a hydroxyethyl farnesyl side group. The protein is Protoheme IX farnesyltransferase of Hyperthermus butylicus (strain DSM 5456 / JCM 9403 / PLM1-5).